The following is a 162-amino-acid chain: Ribosome maturation factor RimP (162 aa).

Belongs to the RimP family.

It localises to the cytoplasm. Its function is as follows. Required for maturation of 30S ribosomal subunits. In Ralstonia nicotianae (strain ATCC BAA-1114 / GMI1000) (Ralstonia solanacearum), this protein is Ribosome maturation factor RimP.